Consider the following 158-residue polypeptide: NAD(P)H-quinone oxidoreductase subunit J, chloroplastic (158 aa).

This sequence belongs to the complex I 30 kDa subunit family. NDH is composed of at least 16 different subunits, 5 of which are encoded in the nucleus.

The protein localises to the plastid. It localises to the chloroplast thylakoid membrane. It catalyses the reaction a plastoquinone + NADH + (n+1) H(+)(in) = a plastoquinol + NAD(+) + n H(+)(out). The catalysed reaction is a plastoquinone + NADPH + (n+1) H(+)(in) = a plastoquinol + NADP(+) + n H(+)(out). Functionally, NDH shuttles electrons from NAD(P)H:plastoquinone, via FMN and iron-sulfur (Fe-S) centers, to quinones in the photosynthetic chain and possibly in a chloroplast respiratory chain. The immediate electron acceptor for the enzyme in this species is believed to be plastoquinone. Couples the redox reaction to proton translocation, and thus conserves the redox energy in a proton gradient. The polypeptide is NAD(P)H-quinone oxidoreductase subunit J, chloroplastic (Arabis hirsuta (Hairy rock-cress)).